Reading from the N-terminus, the 421-residue chain is MQALRHVVCALSGGVDSAVAALLLRRRGYQVTGVFMKNWDSLDEHGVCTADKDCEDAYRVCQILDIPFHQVSYVKEYWNDVFSDFLNEYEKGRTPNPDIVCNKHIKFSCFFHYAVDNLGADAIATGHYARTSLEDEEVFEQKHVKKPEGLFRNRFEVRNAVKLLQAADSFKDQTFFLSQVSQDALRRTIFPLGGLTKEFVKKIAAENRLHHVLQKKESMGMCFIGKRNFEHFLLQYLQPRPGHFISIEDNKVLGTHKGWFLYTLGQRANIGGLREPWYVVEKDSVKGDVFVAPRTDHPALYRDLLRTSRVHWIAEEPPAALVRDKMMECHFRFRHQMALVPCVLTLNQDGTVWVTAVQAVRALATGQFAVFYKGDECLGSGKILRLGPSAYTLQKGQRRAGMATESPSDSPEDGPGLSPLL.

ATP is bound by residues 10 to 17 and Met36; that span reads ALSGGVDS. Residues 96-98 are interaction with target base in tRNA; the sequence is NPD. Catalysis depends on Cys101, which acts as the Nucleophile. A disulfide bridge connects residues Cys101 and Cys222. Gly126 is an ATP binding site. Residues 171 to 173 form an interaction with tRNA region; it reads KDQ. Cys222 functions as the Cysteine persulfide intermediate in the catalytic mechanism. An interaction with tRNA region spans residues 334-335; it reads RH. The interval 395-421 is disordered; that stretch reads KGQRRAGMATESPSDSPEDGPGLSPLL.

It belongs to the MnmA/TRMU family. In terms of tissue distribution, ubiquitous. Abundantly expressed in tissues with high metabolic rates including heart, liver, kidney, and brain.

It localises to the mitochondrion. The enzyme catalyses 5-taurinomethyluridine(34) in tRNA + S-sulfanyl-L-cysteinyl-[protein] + AH2 + ATP = 5-taurinomethyl-2-thiouridine(34) in tRNA + L-cysteinyl-[protein] + A + AMP + diphosphate + H(+). In terms of biological role, catalyzes the 2-thiolation of uridine at the wobble position (U34) of mitochondrial tRNA(Lys), tRNA(Glu) and tRNA(Gln). Required for the formation of 5-taurinomethyl-2-thiouridine (tm5s2U) of mitochondrial tRNA(Lys), tRNA(Glu), and tRNA(Gln) at the wobble position. ATP is required to activate the C2 atom of the wobble base. The sequence is that of Mitochondrial tRNA-specific 2-thiouridylase 1 (TRMU) from Homo sapiens (Human).